Here is a 158-residue protein sequence, read N- to C-terminus: NAD(P)H-quinone oxidoreductase subunit J, chloroplastic (158 aa).

It belongs to the complex I 30 kDa subunit family. As to quaternary structure, NDH is composed of at least 16 different subunits, 5 of which are encoded in the nucleus.

The protein localises to the plastid. The protein resides in the chloroplast thylakoid membrane. It carries out the reaction a plastoquinone + NADH + (n+1) H(+)(in) = a plastoquinol + NAD(+) + n H(+)(out). It catalyses the reaction a plastoquinone + NADPH + (n+1) H(+)(in) = a plastoquinol + NADP(+) + n H(+)(out). In terms of biological role, NDH shuttles electrons from NAD(P)H:plastoquinone, via FMN and iron-sulfur (Fe-S) centers, to quinones in the photosynthetic chain and possibly in a chloroplast respiratory chain. The immediate electron acceptor for the enzyme in this species is believed to be plastoquinone. Couples the redox reaction to proton translocation, and thus conserves the redox energy in a proton gradient. The sequence is that of NAD(P)H-quinone oxidoreductase subunit J, chloroplastic from Ranunculus macranthus (Large buttercup).